A 277-amino-acid chain; its full sequence is Bis(5'-nucleosyl)-tetraphosphatase, symmetrical (277 aa).

This sequence belongs to the Ap4A hydrolase family.

It catalyses the reaction P(1),P(4)-bis(5'-adenosyl) tetraphosphate + H2O = 2 ADP + 2 H(+). Its function is as follows. Hydrolyzes diadenosine 5',5'''-P1,P4-tetraphosphate to yield ADP. The chain is Bis(5'-nucleosyl)-tetraphosphatase, symmetrical from Methylobacillus flagellatus (strain ATCC 51484 / DSM 6875 / VKM B-1610 / KT).